The following is a 129-amino-acid chain: Follitropin subunit beta (129 aa).

Positions 1–20 (MKTAQFYVLFFCWKAIWCNG) are cleaved as a signal peptide. 6 cysteine pairs are disulfide-bonded: cysteine 21–cysteine 69, cysteine 35–cysteine 84, cysteine 38–cysteine 122, cysteine 46–cysteine 100, cysteine 50–cysteine 102, and cysteine 105–cysteine 112. Asparagine 25 and asparagine 42 each carry an N-linked (GlcNAc...) asparagine glycan.

This sequence belongs to the glycoprotein hormones subunit beta family. As to quaternary structure, heterodimer. The active follitropin is a heterodimer composed of an alpha chain/CGA shared with other hormones and a unique beta chain/FSHB shown here.

It localises to the secreted. Together with the alpha chain CGA constitutes follitropin, the follicle-stimulating hormone, and provides its biological specificity to the hormone heterodimer. Binds FSHR, a G protein-coupled receptor, on target cells to activate downstream signaling pathways. Follitropin is involved in follicle development and spermatogenesis in reproductive organs. The polypeptide is Follitropin subunit beta (FSHB) (Trichosurus vulpecula (Brush-tailed possum)).